A 192-amino-acid polypeptide reads, in one-letter code: Adenylate kinase (192 aa).

10–15 (GAGKGT) is an ATP binding site. Positions 30–59 (STGDMLRAAVAQATEVGKRAKAVMDAGQLV) are NMP. Residues Thr-31, Arg-36, 57–59 (QLV), 85–88 (GYPR), and Gln-92 each bind AMP. The segment at 126–142 (NRVAETVAAGGTVRSDD) is LID. ATP is bound at residue Arg-127. The AMP site is built by Arg-139 and Arg-150. Ala-178 is a binding site for ATP.

This sequence belongs to the adenylate kinase family. In terms of assembly, monomer.

It localises to the cytoplasm. It catalyses the reaction AMP + ATP = 2 ADP. It functions in the pathway purine metabolism; AMP biosynthesis via salvage pathway; AMP from ADP: step 1/1. Its function is as follows. Catalyzes the reversible transfer of the terminal phosphate group between ATP and AMP. Plays an important role in cellular energy homeostasis and in adenine nucleotide metabolism. This is Adenylate kinase from Sinorhizobium medicae (strain WSM419) (Ensifer medicae).